A 1877-amino-acid polypeptide reads, in one-letter code: Transmembrane protein 131 (1877 aa).

The N-terminal stretch at 1-20 (MGKRAGGAAAAAAAASTSSA) is a signal peptide. Residues 21 to 1115 (AGLEPAAGRG…AEALPRPNWE (1095 aa)) are Lumenal-facing. Positions 107–281 (RFEPPMLDFH…ETKGVMRASF (175 aa)) are papD-L domain. A helical membrane pass occupies residues 1116-1136 (LALYIIISGVMSALFLLVIGT). The Cytoplasmic portion of the chain corresponds to 1137 to 1877 (AYLEAQGIWE…WSNSHFPHEN (741 aa)). A compositionally biased stretch (polar residues) spans 1197-1227 (NASSRPGTGSHRQCGTSVHPHSSHGSKNSAD). Disordered stretches follow at residues 1197–1573 (NASS…SSST), 1590–1655 (LKQR…NPTF), 1679–1707 (SDFS…SPVS), and 1830–1852 (NSAA…TYNP). Over residues 1233–1258 (TRNSSSMSSRTSPQAAASQSTSKTSP) the composition is skewed to low complexity. Over residues 1301–1311 (QPPPPVPQHQE) the composition is skewed to pro residues. A phosphoserine mark is found at serine 1318 and serine 1338. Basic and acidic residues-rich tracts occupy residues 1326–1339 (SHPE…HSSE) and 1349–1360 (AMDKDFDHHDSS). Serine 1371 carries the phosphoserine modification. Positions 1376 to 1391 (SKGKGKSLQQRKAKPP) are enriched in basic residues. The segment covering 1392-1414 (KKQEEKEKRGKGKPQEDELKDAL) has biased composition (basic and acidic residues). Low complexity predominate over residues 1420-1432 (SSTTTETSNPDTE). Polar residues-rich tracts occupy residues 1507–1523 (TLAS…TKGT) and 1538–1550 (LPSS…TSSS). The span at 1599–1608 (PASPSLPTAP) shows a compositional bias: pro residues. Positions 1609–1646 (CPFTSRGSYSSVVNSSGSDTKAKQTSSSKSKLTKAASL) are enriched in low complexity. Over residues 1830–1839 (NSAAAHTPSA) the composition is skewed to polar residues. 2 positions are modified to phosphoserine: serine 1857 and serine 1865.

This sequence belongs to the TMEM131 family. In terms of assembly, interacts (via PapD-L domain) with COL1A2 (via C-terminus); the interaction is direct, may occur with other collagen proteins, and is involved in assembly and TRAPPIII ER-to-Golgi transport complex-dependent secretion of collagen. Interacts (via C-terminus) with TRAPPC8 (via C-terminus); the interaction is direct.

Its subcellular location is the membrane. Functionally, collagen binding transmembrane protein involved in collagen secretion by recruiting the ER-to-Golgi transport complex TRAPPIII. May play a role in the immune response to viral infection. This chain is Transmembrane protein 131, found in Mus musculus (Mouse).